The following is a 314-amino-acid chain: Methionyl-tRNA formyltransferase (314 aa).

108–111 (SLLP) contributes to the (6S)-5,6,7,8-tetrahydrofolate binding site.

It belongs to the Fmt family.

It catalyses the reaction L-methionyl-tRNA(fMet) + (6R)-10-formyltetrahydrofolate = N-formyl-L-methionyl-tRNA(fMet) + (6S)-5,6,7,8-tetrahydrofolate + H(+). Functionally, attaches a formyl group to the free amino group of methionyl-tRNA(fMet). The formyl group appears to play a dual role in the initiator identity of N-formylmethionyl-tRNA by promoting its recognition by IF2 and preventing the misappropriation of this tRNA by the elongation apparatus. In Akkermansia muciniphila (strain ATCC BAA-835 / DSM 22959 / JCM 33894 / BCRC 81048 / CCUG 64013 / CIP 107961 / Muc), this protein is Methionyl-tRNA formyltransferase.